The sequence spans 354 residues: Neutral protease 2 homolog AN7962 (354 aa).

An N-terminal signal peptide occupies residues 1 to 19; that stretch reads MKFIAPIALLGMFQAASAS. The propeptide occupies 20 to 178; the sequence is PVDIKTSNAG…GAQLSKLSKR (159 aa). Disulfide bonds link Cys-184-Cys-255 and Cys-262-Cys-280. A Zn(2+)-binding site is contributed by His-305. Glu-306 is an active-site residue. Zn(2+) is bound by residues His-309 and Asp-320.

Belongs to the peptidase M35 family. Zn(2+) serves as cofactor.

The protein resides in the secreted. It carries out the reaction Preferential cleavage of bonds with hydrophobic residues in P1'. Also 3-Asn-|-Gln-4 and 8-Gly-|-Ser-9 bonds in insulin B chain.. In terms of biological role, secreted metalloproteinase that allows assimilation of proteinaceous substrates. Shows high activities on basic nuclear substrates such as histone and protamine. This Emericella nidulans (strain FGSC A4 / ATCC 38163 / CBS 112.46 / NRRL 194 / M139) (Aspergillus nidulans) protein is Neutral protease 2 homolog AN7962.